The primary structure comprises 441 residues: RUN domain-containing protein 3A (441 aa).

The segment at 1-293 (MEASFVQTTM…LQLQLEEAAA (293 aa)) is interaction with RAP2A. Residues 52–184 (DDSSEEFVNF…IDFSFCLKGE (133 aa)) enclose the RUN domain. Residue threonine 210 is modified to Phosphothreonine. Residues 211–234 (DEEERHSAESSTSEDNSPEHPYLP) are disordered. Serine 227 is subject to Phosphoserine. The stretch at 262–317 (YLEELVRLRESQLKDLEAENRRLQLQLEEAAAQNQREKRELEGVILELQEQLTGLI) forms a coiled coil. Positions 367–379 (PLSAEASLSSDSQ) are enriched in polar residues. The segment at 367–399 (PLSAEASLSSDSQRLGEGKRDEEPWGPIGKDPT) is disordered. The segment covering 380-389 (RLGEGKRDEE) has biased composition (basic and acidic residues). Phosphoserine is present on residues serine 411 and serine 414.

Belongs to the RUNDC3 family. As to quaternary structure, interacts with the GTP-bound form of RAP2A.

May act as an effector of RAP2A in neuronal cells. The protein is RUN domain-containing protein 3A (RUNDC3A) of Bos taurus (Bovine).